Reading from the N-terminus, the 333-residue chain is Anthranilate phosphoribosyltransferase (333 aa).

5-phospho-alpha-D-ribose 1-diphosphate-binding positions include glycine 81, 84–85 (GN), threonine 89, 91–94 (NIST), 109–117 (KHGNRSVSS), and alanine 121. Residue glycine 81 coordinates anthranilate. Serine 93 lines the Mg(2+) pocket. An anthranilate-binding site is contributed by asparagine 112. Arginine 167 contacts anthranilate. Positions 225 and 226 each coordinate Mg(2+).

Belongs to the anthranilate phosphoribosyltransferase family. As to quaternary structure, homodimer. The cofactor is Mg(2+).

It carries out the reaction N-(5-phospho-beta-D-ribosyl)anthranilate + diphosphate = 5-phospho-alpha-D-ribose 1-diphosphate + anthranilate. It functions in the pathway amino-acid biosynthesis; L-tryptophan biosynthesis; L-tryptophan from chorismate: step 2/5. Its function is as follows. Catalyzes the transfer of the phosphoribosyl group of 5-phosphorylribose-1-pyrophosphate (PRPP) to anthranilate to yield N-(5'-phosphoribosyl)-anthranilate (PRA). The sequence is that of Anthranilate phosphoribosyltransferase from Haemophilus influenzae (strain ATCC 51907 / DSM 11121 / KW20 / Rd).